Here is a 949-residue protein sequence, read N- to C-terminus: MMKDYYTWTYPDIPEDVAQKLQQLKNSLVVVGIVGRSKCDQANKMQAFGMEPPIEHTAKDGQVQCYYKPGTSSLLLHFETTYDEAILGQMIDVCMEDVDTPFDFDSFYERMRCRFVRMMLLALHACHIVVYVETGPTFDPTLVTVFQLLKFAREQHLMQFLPQMLRETPAARMSEKTRLCAPRILFLFENFPRDEPKTRECVSAYEFQTEDCIYELLRHHTIVTNSSSTSLVALPNNKQFVFFNAHEQLHEDKLLKAIECLNQAMYKPDAKEEEEDLEILELAPFDGFVKPYNLPVDEKELEKQQYKKDHTVWHFLQRHVQDALLGCFDEGSFKQHSQHGQFQLLNIQEWHDYMATLHKLLVENAKDPNHETSNEEYKLFLKCFDESLNYEKKFWTHLCELGLKKGIAAYKNAAPANYGSATHRQLLADATVAFEEEGRGPQAKAALAKLAAICQKYWQDGRQQCEQLSLRSHPCTLPKNLPHEKHNSAVIHISSCNCGRTQGRREDPFSMRQANYEFYEHIAQMCNLCVKVKHYKFPVFEPSVSDYRAAAFEAAFPLLHTAKSGARQGEEGDDEPEDEVVQEQQQPVEEQRQNTASNGCSQPLSPTFGSDLNMSIAGFGASLNESQASSEQLSNSEQNTSSSGTSSADTENELVVELQEPAKKETREDAGPADALPTSTTEYLPGLVHTVSNFGLLPLFPSWSLACVGPSSIYSHNTGLQEHFQSGFLSGANFLLPWDVQLRLVHAPKQQHHTHHQQQHPGKKQQRWKKQGDRLSLKIFVGMEYECSRGHRFMMCAPDRVLRGGADIERDTCSKVVHNNMPLYYPCPCRSQTSYLAQLMRIHVVTPKAPVNIIVDPKVCVGKEKYTFTLGSIVPPRLSQSAYWIIRLPYIYQGDDVIIAPPEKLEPDDPLAGGYLLPGMFGVAETDATQDLNEPGRMGASAAEDFTRI.

3 disordered regions span residues 564–607 (SGAR…LSPT), 624–652 (NESQ…DTEN), and 748–768 (PKQQ…QQRW). Residues 571–581 (EGDDEPEDEVV) are compositionally biased toward acidic residues. A compositionally biased stretch (polar residues) spans 594 to 607 (NTASNGCSQPLSPT). Residues 624–648 (NESQASSEQLSNSEQNTSSSGTSSA) show a composition bias toward low complexity. Residues 749-768 (KQQHHTHHQQQHPGKKQQRW) are compositionally biased toward basic residues.

The protein belongs to the SMG8 family.

Involved in nonsense-mediated decay (NMD) of mRNAs containing premature stop codons. Probable component of kinase complex containing nonC and recruited to stalled ribosomes. The polypeptide is Nonsense-mediated mRNA decay factor SMG8 (Drosophila erecta (Fruit fly)).